Reading from the N-terminus, the 330-residue chain is G-protein coupled receptor 157 (330 aa).

Over 1–15 (MPTPAPPTELLPWER) the chain is Extracellular. Residues 16-36 (AVVLLSCVLSALGSGLLVATH) traverse the membrane as a helical segment. Over 37–48 (ALWPDLRSRARR) the chain is Cytoplasmic. A helical transmembrane segment spans residues 49–69 (LLLFLSLADLLSAASYFYGVL). Residues 70–87 (QDFAGTSWDCVLQGALST) lie on the Extracellular side of the membrane. A helical membrane pass occupies residues 88-108 (FANTSSFFWTVAIALYLYLNI). At 109–119 (VRATRGPCTDH) the chain is on the cytoplasmic side. The helical transmembrane segment at 120–140 (LVWAFHLISWGVPLAITVAAV) threads the bilayer. The Extracellular portion of the chain corresponds to 141–166 (CLKKIGYDASDVSVGWCWINLEAEDR). The chain crosses the membrane as a helical span at residues 167–187 (VLWMLLTGKLWEMLAYILLPL). The Cytoplasmic segment spans residues 188 to 227 (LYLLVRKHINRAHQALSEYRPIWEGRQLQRGSPTSMADKK). The chain crosses the membrane as a helical span at residues 228–250 (LILIPFIFICLRVWSTVRFVLTL). The Extracellular portion of the chain corresponds to 251 to 259 (CGSPVVQAP). The helical transmembrane segment at 260 to 282 (VLVVLHGIGNTFQGGANCIMFVL) threads the bilayer. Over 283 to 330 (CTRAVRTRLFSLCCCYPRPPTQNPPGASIPPKMGESQESRRTPEVPST) the chain is Cytoplasmic. Positions 303 to 330 (TQNPPGASIPPKMGESQESRRTPEVPST) are disordered. The segment covering 317–330 (ESQESRRTPEVPST) has biased composition (basic and acidic residues).

Belongs to the G-protein coupled receptor 2 family.

The protein localises to the cell projection. It localises to the cilium membrane. In terms of biological role, orphan receptor that promotes neuronal differentiation of radial glial progenitors (RGPs). The activity of this receptor is mediated by a G(q)-protein that activates a phosphatidylinositol-calcium second messenger. This is G-protein coupled receptor 157 (Gpr157) from Rattus norvegicus (Rat).